The sequence spans 490 residues: Aspartyl/glutamyl-tRNA(Asn/Gln) amidotransferase subunit B (490 aa).

This sequence belongs to the GatB/GatE family. GatB subfamily. In terms of assembly, heterotrimer of A, B and C subunits.

The enzyme catalyses L-glutamyl-tRNA(Gln) + L-glutamine + ATP + H2O = L-glutaminyl-tRNA(Gln) + L-glutamate + ADP + phosphate + H(+). It catalyses the reaction L-aspartyl-tRNA(Asn) + L-glutamine + ATP + H2O = L-asparaginyl-tRNA(Asn) + L-glutamate + ADP + phosphate + 2 H(+). Allows the formation of correctly charged Asn-tRNA(Asn) or Gln-tRNA(Gln) through the transamidation of misacylated Asp-tRNA(Asn) or Glu-tRNA(Gln) in organisms which lack either or both of asparaginyl-tRNA or glutaminyl-tRNA synthetases. The reaction takes place in the presence of glutamine and ATP through an activated phospho-Asp-tRNA(Asn) or phospho-Glu-tRNA(Gln). This chain is Aspartyl/glutamyl-tRNA(Asn/Gln) amidotransferase subunit B, found in Symbiobacterium thermophilum (strain DSM 24528 / JCM 14929 / IAM 14863 / T).